Reading from the N-terminus, the 178-residue chain is Large ribosomal subunit protein uL5 (178 aa).

Belongs to the universal ribosomal protein uL5 family. Part of the 50S ribosomal subunit; part of the 5S rRNA/L5/L18/L25 subcomplex. Contacts the 5S rRNA and the P site tRNA. Forms a bridge to the 30S subunit in the 70S ribosome.

Functionally, this is one of the proteins that bind and probably mediate the attachment of the 5S RNA into the large ribosomal subunit, where it forms part of the central protuberance. In the 70S ribosome it contacts protein S13 of the 30S subunit (bridge B1b), connecting the 2 subunits; this bridge is implicated in subunit movement. Contacts the P site tRNA; the 5S rRNA and some of its associated proteins might help stabilize positioning of ribosome-bound tRNAs. This is Large ribosomal subunit protein uL5 from Prochlorococcus marinus subsp. pastoris (strain CCMP1986 / NIES-2087 / MED4).